The following is a 259-amino-acid chain: Phosphatidylglycerol--prolipoprotein diacylglyceryl transferase (259 aa).

A run of 4 helical transmembrane segments spans residues Leu-12–Ala-32, Ile-41–Ala-61, Ile-80–Val-100, and Val-109–Ile-129. Arg-131 is a binding site for a 1,2-diacyl-sn-glycero-3-phospho-(1'-sn-glycerol). The next 3 helical transmembrane spans lie at Ile-167 to Trp-187, Leu-194 to Ile-214, and Gly-226 to Ile-246.

The protein belongs to the Lgt family.

The protein localises to the cell membrane. The catalysed reaction is L-cysteinyl-[prolipoprotein] + a 1,2-diacyl-sn-glycero-3-phospho-(1'-sn-glycerol) = an S-1,2-diacyl-sn-glyceryl-L-cysteinyl-[prolipoprotein] + sn-glycerol 1-phosphate + H(+). It functions in the pathway protein modification; lipoprotein biosynthesis (diacylglyceryl transfer). In terms of biological role, catalyzes the transfer of the diacylglyceryl group from phosphatidylglycerol to the sulfhydryl group of the N-terminal cysteine of a prolipoprotein, the first step in the formation of mature lipoproteins. This chain is Phosphatidylglycerol--prolipoprotein diacylglyceryl transferase, found in Streptococcus pyogenes serotype M3 (strain ATCC BAA-595 / MGAS315).